Here is a 626-residue protein sequence, read N- to C-terminus: Putative ankyrin repeat protein L768 (626 aa).

5 ANK repeats span residues 217-246 (NLYD…EYDF), 333-362 (DLDM…NINK), 421-451 (TAEN…TEHI), 515-545 (SNLK…NQDY), and 547-571 (QWAL…NVNP).

The protein is Putative ankyrin repeat protein L768 of Acanthamoeba polyphaga mimivirus (APMV).